Consider the following 259-residue polypeptide: Imidazole glycerol phosphate synthase subunit HisF (259 aa).

Residues Asp11 and Asp130 contribute to the active site.

It belongs to the HisA/HisF family. Heterodimer of HisH and HisF.

The protein localises to the cytoplasm. The catalysed reaction is 5-[(5-phospho-1-deoxy-D-ribulos-1-ylimino)methylamino]-1-(5-phospho-beta-D-ribosyl)imidazole-4-carboxamide + L-glutamine = D-erythro-1-(imidazol-4-yl)glycerol 3-phosphate + 5-amino-1-(5-phospho-beta-D-ribosyl)imidazole-4-carboxamide + L-glutamate + H(+). Its pathway is amino-acid biosynthesis; L-histidine biosynthesis; L-histidine from 5-phospho-alpha-D-ribose 1-diphosphate: step 5/9. Functionally, IGPS catalyzes the conversion of PRFAR and glutamine to IGP, AICAR and glutamate. The HisF subunit catalyzes the cyclization activity that produces IGP and AICAR from PRFAR using the ammonia provided by the HisH subunit. This is Imidazole glycerol phosphate synthase subunit HisF from Chloroflexus aurantiacus (strain ATCC 29366 / DSM 635 / J-10-fl).